A 660-amino-acid polypeptide reads, in one-letter code: Bifunctional polymyxin resistance protein ArnA (660 aa).

The formyltransferase ArnAFT stretch occupies residues 1–304 (MKTVVFAYHD…TLGLVQGSRL (304 aa)). 86 to 88 (HLI) is a binding site for (6R)-10-formyltetrahydrofolate. H104 (proton donor; for formyltransferase activity) is an active-site residue. (6R)-10-formyltetrahydrofolate contacts are provided by residues R114 and 136 to 140 (VKRAD). The dehydrogenase ArnADH stretch occupies residues 314–660 (RRTRVLILGV…RTVDLTDKPS (347 aa)). Residues D347 and 368-369 (DI) contribute to the NAD(+) site. Residues A393, Y398, and 432 to 433 (TS) contribute to the UDP-alpha-D-glucuronate site. The active-site Proton acceptor; for decarboxylase activity is E434. Residues R460, N492, 526–535 (KLIDGGKQKR), and Y613 contribute to the UDP-alpha-D-glucuronate site. The Proton donor; for decarboxylase activity role is filled by R619.

The protein in the N-terminal section; belongs to the Fmt family. UDP-L-Ara4N formyltransferase subfamily. It in the C-terminal section; belongs to the NAD(P)-dependent epimerase/dehydratase family. UDP-glucuronic acid decarboxylase subfamily. In terms of assembly, homohexamer, formed by a dimer of trimers.

It carries out the reaction UDP-alpha-D-glucuronate + NAD(+) = UDP-beta-L-threo-pentopyranos-4-ulose + CO2 + NADH. The catalysed reaction is UDP-4-amino-4-deoxy-beta-L-arabinose + (6R)-10-formyltetrahydrofolate = UDP-4-deoxy-4-formamido-beta-L-arabinose + (6S)-5,6,7,8-tetrahydrofolate + H(+). Its pathway is nucleotide-sugar biosynthesis; UDP-4-deoxy-4-formamido-beta-L-arabinose biosynthesis; UDP-4-deoxy-4-formamido-beta-L-arabinose from UDP-alpha-D-glucuronate: step 1/3. It participates in nucleotide-sugar biosynthesis; UDP-4-deoxy-4-formamido-beta-L-arabinose biosynthesis; UDP-4-deoxy-4-formamido-beta-L-arabinose from UDP-alpha-D-glucuronate: step 3/3. It functions in the pathway bacterial outer membrane biogenesis; lipopolysaccharide biosynthesis. Bifunctional enzyme that catalyzes the oxidative decarboxylation of UDP-glucuronic acid (UDP-GlcUA) to UDP-4-keto-arabinose (UDP-Ara4O) and the addition of a formyl group to UDP-4-amino-4-deoxy-L-arabinose (UDP-L-Ara4N) to form UDP-L-4-formamido-arabinose (UDP-L-Ara4FN). The modified arabinose is attached to lipid A and is required for resistance to polymyxin and cationic antimicrobial peptides. In Escherichia coli O9:H4 (strain HS), this protein is Bifunctional polymyxin resistance protein ArnA.